The sequence spans 137 residues: Basic phospholipase A2 homolog bothropstoxin-I (137 aa).

A signal peptide spans 1-16 (MRTLWIMAVLLVGVEG). Cystine bridges form between C42/C131, C44/C60, C59/C111, C65/C137, C66/C104, C73/C97, and C91/C102. The tract at residues 121–133 (KKYRYHLKPFCKK) is important for membrane-damaging activities in eukaryotes and bacteria; heparin-binding.

This sequence belongs to the phospholipase A2 family. Group II subfamily. K49 sub-subfamily. Homodimer; non-covalently linked (probable alternative/compact dimer conformation in solution). Binds to heparin. Expressed by the venom gland.

Its subcellular location is the secreted. Its activity is regulated as follows. Suramin inhibits both myotoxic and muscle-paralyzing activities. Chicoric acid inhibits myotoxic activity. Zinc ions inhibits the myotoxic activity and the neuromuscular blockade. Heparin inhibits myotoxic activity. Snake venom phospholipase A2 homolog that lacks enzymatic activity. Shows local myotoxic activity. Induces inflammation, since it induces edema and leukocytes infiltration. In addition, it induces NLRP3 NLRP3, ASC (PYCARD), caspase-1 (CASP1), and IL-1beta (IL1B) gene expression in the gastrocnemius muscle, showing that it is able to activate NLRP3 inflammasome. It also damages artificial and myoblast membranes by a calcium-independent mechanism, has bactericidal activity, and induces neuromuscular blockade. A model of myotoxic mechanism has been proposed: an apo Lys49-PLA2 is activated by the entrance of a hydrophobic molecule (e.g. fatty acid) at the hydrophobic channel of the protein leading to a reorientation of a monomer. This reorientation causes a transition between 'inactive' to 'active' states, causing alignment of C-terminal and membrane-docking sites (MDoS) side-by-side and putting the membrane-disruption sites (MDiS) in the same plane, exposed to solvent and in a symmetric position for both monomers. The MDoS region stabilizes the toxin on membrane by the interaction of charged residues with phospholipid head groups. Subsequently, the MDiS region destabilizes the membrane with penetration of hydrophobic residues. This insertion causes a disorganization of the membrane, allowing an uncontrolled influx of ions (i.e. calcium and sodium), and eventually triggering irreversible intracellular alterations and cell death. The polypeptide is Basic phospholipase A2 homolog bothropstoxin-I (Bothrops jararacussu (Jararacussu)).